We begin with the raw amino-acid sequence, 202 residues long: ATP-dependent Clp protease proteolytic subunit (202 aa).

The Nucleophile role is filled by Ser-101. The active site involves His-126.

The protein belongs to the peptidase S14 family. Component of the chloroplastic Clp protease core complex.

It is found in the plastid. Its subcellular location is the chloroplast stroma. It carries out the reaction Hydrolysis of proteins to small peptides in the presence of ATP and magnesium. alpha-casein is the usual test substrate. In the absence of ATP, only oligopeptides shorter than five residues are hydrolyzed (such as succinyl-Leu-Tyr-|-NHMec, and Leu-Tyr-Leu-|-Tyr-Trp, in which cleavage of the -Tyr-|-Leu- and -Tyr-|-Trp bonds also occurs).. Cleaves peptides in various proteins in a process that requires ATP hydrolysis. Has a chymotrypsin-like activity. Plays a major role in the degradation of misfolded proteins. In Buxus microphylla (Littleleaf boxwood), this protein is ATP-dependent Clp protease proteolytic subunit.